Reading from the N-terminus, the 459-residue chain is Jacalin-related lectin 12 (459 aa).

3 consecutive Jacalin-type lectin domains span residues 2-148 (SQDS…YFTP), 151-296 (PTRM…YITT), and 298-443 (TLTK…YSFP).

It belongs to the jacalin lectin family.

This chain is Jacalin-related lectin 12 (JAL12), found in Arabidopsis thaliana (Mouse-ear cress).